The sequence spans 435 residues: GTPase Der (435 aa).

EngA-type G domains are found at residues Pro3–Thr168 and Ile176–Gln351. GTP is bound by residues Gly9–Ser16, Asp56–Tyr60, Asn120–Glu123, Gly182–Ser189, Asp229–Leu233, and Asn294–Asp297. In terms of domain architecture, KH-like spans Lys352 to Lys435.

Belongs to the TRAFAC class TrmE-Era-EngA-EngB-Septin-like GTPase superfamily. EngA (Der) GTPase family. Associates with the 50S ribosomal subunit.

GTPase that plays an essential role in the late steps of ribosome biogenesis. This chain is GTPase Der, found in Chlorobium phaeobacteroides (strain BS1).